We begin with the raw amino-acid sequence, 174 residues long: Cytochrome c-type biogenesis protein CcmE (174 aa).

The Cytoplasmic segment spans residues 1–7; the sequence is MTRKSRR. Residues 8–28 traverse the membrane as a helical; Signal-anchor for type II membrane protein segment; that stretch reads LILIGAGLGVLALAAGLILTA. Topologically, residues 29–174 are periplasmic; it reads LNDTIVFFRT…PAVSPARSTP (146 aa). Heme-binding residues include histidine 121 and tyrosine 125. The span at 130–144 shows a compositional bias: basic and acidic residues; sequence VADALKKSGHWKEGE. The tract at residues 130-174 is disordered; sequence VADALKKSGHWKEGEEGGPVPPAAKTPGPQSSAAPPAVSPARSTP. Low complexity predominate over residues 156–174; sequence PGPQSSAAPPAVSPARSTP.

It belongs to the CcmE/CycJ family.

The protein resides in the cell inner membrane. Its function is as follows. Heme chaperone required for the biogenesis of c-type cytochromes. Transiently binds heme delivered by CcmC and transfers the heme to apo-cytochromes in a process facilitated by CcmF and CcmH. This chain is Cytochrome c-type biogenesis protein CcmE, found in Azorhizobium caulinodans (strain ATCC 43989 / DSM 5975 / JCM 20966 / LMG 6465 / NBRC 14845 / NCIMB 13405 / ORS 571).